Here is a 362-residue protein sequence, read N- to C-terminus: DNA replication and repair protein RecF (362 aa).

Position 30 to 37 (30 to 37 (GLNAQGKS)) interacts with ATP.

The protein belongs to the RecF family.

The protein localises to the cytoplasm. The RecF protein is involved in DNA metabolism; it is required for DNA replication and normal SOS inducibility. RecF binds preferentially to single-stranded, linear DNA. It also seems to bind ATP. The polypeptide is DNA replication and repair protein RecF (Thermoanaerobacter sp. (strain X514)).